Reading from the N-terminus, the 267-residue chain is Small ribosomal subunit protein uS2 (267 aa).

Residues 232–267 are disordered; that stretch reads ATVREEEFADAPAEDAKPARRAPAKKAAADKGEAQA. Basic and acidic residues predominate over residues 258–267; sequence AAADKGEAQA.

This sequence belongs to the universal ribosomal protein uS2 family.

This Stenotrophomonas maltophilia (strain R551-3) protein is Small ribosomal subunit protein uS2.